The sequence spans 92 residues: Small ribosomal subunit protein uS19 (92 aa).

The protein belongs to the universal ribosomal protein uS19 family.

Protein S19 forms a complex with S13 that binds strongly to the 16S ribosomal RNA. This is Small ribosomal subunit protein uS19 from Desulfosudis oleivorans (strain DSM 6200 / JCM 39069 / Hxd3) (Desulfococcus oleovorans).